A 343-amino-acid polypeptide reads, in one-letter code: E3 ubiquitin-protein ligase SP1 (343 aa).

A helical membrane pass occupies residues 1–21 (MIPWGGVTCCLSAAALYLLGR). The Chloroplast intermembrane segment spans residues 22 to 222 (SSGRDAEVLE…LISNLGKWSR (201 aa)). A helical transmembrane segment spans residues 223–244 (LYKYASMGFTVLGVFLITKHVI). Topologically, residues 245–343 (DSVLERRRRR…IDLAVKTYRH (99 aa)) are cytoplasmic. Residues 296 to 331 (CVICLEQEYNAVFVPCGHMCCCTACSSHLTSCPLCR) form an RING-type zinc finger.

In terms of assembly, interacts with TOC33, TOC75-3 and TOC159. Post-translationally, auto-ubiquitinated.

The protein resides in the plastid. It is found in the chloroplast outer membrane. It catalyses the reaction S-ubiquitinyl-[E2 ubiquitin-conjugating enzyme]-L-cysteine + [acceptor protein]-L-lysine = [E2 ubiquitin-conjugating enzyme]-L-cysteine + N(6)-ubiquitinyl-[acceptor protein]-L-lysine.. Its pathway is protein modification; protein ubiquitination. E3 ubiquitin-protein ligase involved in the regulation of protein import in the chloroplast. Associates with TOC complexes and mediates ubiquitination of TOC components, promoting their degradation via the ubiquitin-proteasome system (UPS). Plays a role in the reorganization of the TOC machinery. Involved in a mechanism that regulates plastid biogenesis via UPS. Promotes stress tolerance by depleting the chloroplast protein import apparatus, which limits photosystem assembly and the potential for reactive oxygen species (ROS) formation. May act as negative regulator of programmed cell death (PCD) during biotic stress. This is E3 ubiquitin-protein ligase SP1 from Arabidopsis thaliana (Mouse-ear cress).